The sequence spans 523 residues: Glycine betaine transporter 1 (523 aa).

12 consecutive transmembrane segments (helical) span residues 33–53 (VFGISAGFIALFLVAALVLDA), 71–91 (FDWLFIIAGNIFVIFCLALIV), 109–129 (SFMSWLAMLFAAGMGIGLMFW), 165–185 (FHWGLHPWAIYGVVALSLAFF), 214–234 (IVDILAVLATLFGLATSLGLG), 251–271 (GLGLQIVVITVVTLLAVVSVV), 286–306 (MVVAFLLLILVGLIGWAASLG), 337–357 (WTVFYWAWWISWSPFVGMFIA), 372–392 (VLIVPTVVTVVWMSVFGGLAI), 420–440 (VLPFGNILSIIAVVLVLVFFI), 467–487 (VFWAFMEGAIAVALLWIGGSE), and 496–516 (AISTALPFTFILLAMCVSLLM).

This sequence belongs to the BCCT transporter (TC 2.A.15) family.

The protein localises to the cell inner membrane. Functionally, involved in the uptake of the osmoprotectant glycine betaine. The polypeptide is Glycine betaine transporter 1 (Vibrio parahaemolyticus serotype O3:K6 (strain RIMD 2210633)).